Consider the following 224-residue polypeptide: MTARIGIITFPGTLDDVDAARAARRVGAQPVSLWHADADLKGVDAVVVPGGFSYGDYLRAGAIARFAPVMTEVVDAARRGMPVLGICNGFQVLCEAGLLPGALTRNVGLHFICRDVWLRVASTSTAWTSRFEPDADLLVPLKSGEGRYVAPADVLDELEGEGRVVFRYHENLNGSQRDIAGVSSADGRVVGLMPHPEHAIEALTGPSDDGLGLFYSVLDGVLAG.

Positions 4 to 224 (RIGIITFPGT…YSVLDGVLAG (221 aa)) constitute a Glutamine amidotransferase type-1 domain. Cysteine 87 (nucleophile) is an active-site residue. Catalysis depends on residues histidine 195 and glutamate 197.

Part of the FGAM synthase complex composed of 1 PurL, 1 PurQ and 2 PurS subunits.

It localises to the cytoplasm. It catalyses the reaction N(2)-formyl-N(1)-(5-phospho-beta-D-ribosyl)glycinamide + L-glutamine + ATP + H2O = 2-formamido-N(1)-(5-O-phospho-beta-D-ribosyl)acetamidine + L-glutamate + ADP + phosphate + H(+). The enzyme catalyses L-glutamine + H2O = L-glutamate + NH4(+). It participates in purine metabolism; IMP biosynthesis via de novo pathway; 5-amino-1-(5-phospho-D-ribosyl)imidazole from N(2)-formyl-N(1)-(5-phospho-D-ribosyl)glycinamide: step 1/2. In terms of biological role, part of the phosphoribosylformylglycinamidine synthase complex involved in the purines biosynthetic pathway. Catalyzes the ATP-dependent conversion of formylglycinamide ribonucleotide (FGAR) and glutamine to yield formylglycinamidine ribonucleotide (FGAM) and glutamate. The FGAM synthase complex is composed of three subunits. PurQ produces an ammonia molecule by converting glutamine to glutamate. PurL transfers the ammonia molecule to FGAR to form FGAM in an ATP-dependent manner. PurS interacts with PurQ and PurL and is thought to assist in the transfer of the ammonia molecule from PurQ to PurL. The sequence is that of Phosphoribosylformylglycinamidine synthase subunit PurQ from Mycolicibacterium paratuberculosis (strain ATCC BAA-968 / K-10) (Mycobacterium paratuberculosis).